The primary structure comprises 65 residues: MVSVQMNDNESIDKMLKRFKKKYERAGVLKEFRQNAYFVKPSVDGRLKRSRSKRRAQRANEERNS.

Residues 45 to 65 are disordered; the sequence is GRLKRSRSKRRAQRANEERNS. Basic residues predominate over residues 48-57; it reads KRSRSKRRAQ.

The protein belongs to the bacterial ribosomal protein bS21 family.

The sequence is that of Small ribosomal subunit protein bS21 from Chlorobium luteolum (strain DSM 273 / BCRC 81028 / 2530) (Pelodictyon luteolum).